The chain runs to 331 residues: Fructose-1,6-bisphosphatase class 1 2 (331 aa).

Mg(2+) contacts are provided by E80, D98, L100, and D101. Substrate-binding positions include 101–104 (DGSS) and N189. A Mg(2+)-binding site is contributed by E261.

Belongs to the FBPase class 1 family. Homotetramer. The cofactor is Mg(2+).

The protein resides in the cytoplasm. It carries out the reaction beta-D-fructose 1,6-bisphosphate + H2O = beta-D-fructose 6-phosphate + phosphate. The protein operates within carbohydrate biosynthesis; Calvin cycle. In Cereibacter sphaeroides (strain ATCC 17029 / ATH 2.4.9) (Rhodobacter sphaeroides), this protein is Fructose-1,6-bisphosphatase class 1 2.